A 187-amino-acid chain; its full sequence is UPF0301 protein YqgE (187 aa).

This sequence belongs to the UPF0301 (AlgH) family.

This chain is UPF0301 protein YqgE, found in Salmonella heidelberg (strain SL476).